Consider the following 166-residue polypeptide: Large ribosomal subunit protein uL10 (166 aa).

The protein belongs to the universal ribosomal protein uL10 family. Part of the ribosomal stalk of the 50S ribosomal subunit. The N-terminus interacts with L11 and the large rRNA to form the base of the stalk. The C-terminus forms an elongated spine to which L12 dimers bind in a sequential fashion forming a multimeric L10(L12)X complex.

Functionally, forms part of the ribosomal stalk, playing a central role in the interaction of the ribosome with GTP-bound translation factors. The sequence is that of Large ribosomal subunit protein uL10 from Neisseria gonorrhoeae (strain ATCC 700825 / FA 1090).